The primary structure comprises 175 residues: Co-chaperone protein HscB homolog (175 aa).

In terms of domain architecture, J spans 7–79; sequence SHFDLFHLPA…LKRATYLLSL (73 aa).

The protein belongs to the HscB family. As to quaternary structure, interacts with HscA and stimulates its ATPase activity.

In terms of biological role, co-chaperone involved in the maturation of iron-sulfur cluster-containing proteins. Seems to help targeting proteins to be folded toward HscA. The polypeptide is Co-chaperone protein HscB homolog (Burkholderia multivorans (strain ATCC 17616 / 249)).